The following is a 154-amino-acid chain: Protein aau3 (154 aa).

The HTH rrf2-type domain maps to 2–132 (RLTKQTNYAV…QGYTIDDLVK (131 aa)). Positions 91, 99, and 105 each coordinate [2Fe-2S] cluster.

[2Fe-2S] cluster is required as a cofactor.

In terms of biological role, required for growth utilizing PHB cycle intermediates. In Rhizobium meliloti (strain 1021) (Ensifer meliloti), this protein is Protein aau3 (aau3).